A 559-amino-acid chain; its full sequence is Aminopeptidase Q (559 aa).

Residues 1 to 13 (MSRPFSSGVYVSR) lie on the Cytoplasmic side of the membrane. Residues 14 to 34 (GVALLLAALTAVLLLVLVALA) form a helical; Signal-anchor for type II membrane protein membrane-spanning segment. Residues 35 to 559 (SLYGSCAHVQ…VPFRHFLAEH (525 aa)) are Lumenal-facing. Residues Asn121 and Asn129 are each glycosylated (N-linked (GlcNAc...) asparagine). Glu237 is a binding site for substrate. Residues Asn258, Asn285, and Asn343 are each glycosylated (N-linked (GlcNAc...) asparagine). 376–380 (GAMEN) is a binding site for substrate. His412 is a Zn(2+) binding site. Glu413 functions as the Proton acceptor in the catalytic mechanism. Residues His416 and Glu435 each contribute to the Zn(2+) site.

Belongs to the peptidase M1 family. In terms of assembly, homodimer. Zn(2+) serves as cofactor. N-glycosylated.

The protein localises to the membrane. With respect to regulation, inhibited by bestatin. Its function is as follows. Metalloprotease which may be important for placentation by regulating biological activity of key peptides at the embryo-maternal interface. On synthetic substrates it shows a marked preference for Leu-4-methylcoumaryl-7-amide (Leu-MCA) over Met-MCA, Arg-LCA and Lys-LCA. Cleaves the N-terminal amino acid of several peptides such as angiotensin-3, kisspeptin-10 and endokinin C. This Mus musculus (Mouse) protein is Aminopeptidase Q.